The chain runs to 397 residues: 1-deoxy-D-xylulose 5-phosphate reductoisomerase (397 aa).

Residues Thr10, Gly11, Ser12, Ile13, Gly36, Lys37, Asn38, and Asn124 each coordinate NADPH. Lys125 is a 1-deoxy-D-xylulose 5-phosphate binding site. NADPH is bound at residue Glu126. Asp150 contributes to the Mn(2+) binding site. The 1-deoxy-D-xylulose 5-phosphate site is built by Ser151, Glu152, Ser186, and His209. Glu152 contributes to the Mn(2+) binding site. Gly215 provides a ligand contact to NADPH. Ser222, Asn227, Lys228, and Glu231 together coordinate 1-deoxy-D-xylulose 5-phosphate. Residue Glu231 coordinates Mn(2+).

This sequence belongs to the DXR family. Homodimer. It depends on Mg(2+) as a cofactor. Mn(2+) is required as a cofactor.

The enzyme catalyses 2-C-methyl-D-erythritol 4-phosphate + NADP(+) = 1-deoxy-D-xylulose 5-phosphate + NADPH + H(+). Its pathway is isoprenoid biosynthesis; isopentenyl diphosphate biosynthesis via DXP pathway; isopentenyl diphosphate from 1-deoxy-D-xylulose 5-phosphate: step 1/6. Functionally, catalyzes the NADPH-dependent rearrangement and reduction of 1-deoxy-D-xylulose-5-phosphate (DXP) to 2-C-methyl-D-erythritol 4-phosphate (MEP). The protein is 1-deoxy-D-xylulose 5-phosphate reductoisomerase of Proteus mirabilis (strain HI4320).